Consider the following 757-residue polypeptide: MDVNPTLLFLKVPAQNAISTTFPYTGDPPYSHGTGTGYTMDTVNRTHQYSERGKWTTNTETGAPQLNPIDGPLPEDNEPSGYAQTDCVLEAMAFLEESHPGIFENSCLETMEVVQQTRVDKLTQGRQTYDWTLNRNQPAATALANTIEVFRSNGLTANESGRLIDFLKDVMESMDKEEIEITTHFQRKRRVRDNMTKKMVTQRTIGKKKQRVNKRSYLIRALTLNTMTKDAERGKLKRRAIATPGMQIRGFVYFVETLARSICEKLEQSGLPVGGNEKKAKLANVVRKMMTNSQDTELSFTITGDNTKWNENQNPRMFLAMITYITKNQPEWFRNILSIAPIMFSNKMARLGKGYMFESKRMKLRTQIPAEMLASIDLKYFNESTRKKIEKIRPLLIDGTASLSPGMMMGMFNMLSTVLGVSILNLGQKKYTKTTYWWDGLQSSDDFALIVNAPNHEGIQAGVDRFYRTCKLVGINMSKKKSYINKTGTFEFTSFFYRYGFVANFSMELPSFGVSGINESADMSIGVTVIKNNMINNDLGPATAQMALQLFIKDYRYTYRCHRGDTQIQTRRSFELKKLWDQTQSKAGLLVSDGGPNLYNIRNLHIPEVCLKWELMDEDYQGRLCNPLNPFVSHKEIESVNNAVVMPAHGPAKSMEYDAVATTHSWIPKRNRSILNTSQRGILEDEQMYQKCCNLFEKFFPSSSYRRPVGISSMVEAMVSRARIDARIDFESGRIKKEEFSEIMKICSTIEELRRQK.

A disordered region spans residues 52–82 (RGKWTTNTETGAPQLNPIDGPLPEDNEPSGY). The span at 55–64 (WTTNTETGAP) shows a compositional bias: polar residues. 2 short sequence motifs (nuclear localization signal) span residues 187–195 (RKRRVRDNM) and 203–216 (RTIG…NKRS). Residues 249–256 (RGFVYFVE) are promoter-binding site. The RdRp catalytic domain maps to 286–483 (VRKMMTNSQD…GINMSKKKSY (198 aa)).

Belongs to the influenza viruses polymerase PB1 family. As to quaternary structure, influenza RNA polymerase is composed of three subunits: PB1, PB2 and PA. Interacts (via N-terminus) with PA (via C-terminus). Interacts (via C-terminus) with PB2 (via N-terminus); this interaction is essential for transcription initiation. Post-translationally, phosphorylated by host PRKCA.

The protein localises to the host nucleus. It localises to the host cytoplasm. The enzyme catalyses RNA(n) + a ribonucleoside 5'-triphosphate = RNA(n+1) + diphosphate. In terms of biological role, RNA-dependent RNA polymerase which is responsible for replication and transcription of virus RNA segments. The transcription of viral mRNAs occurs by a unique mechanism called cap-snatching. 5' methylated caps of cellular mRNAs are cleaved after 10-13 nucleotides by PA. In turn, these short capped RNAs are used as primers by PB1 for transcription of viral mRNAs. During virus replication, PB1 initiates RNA synthesis and copy vRNA into complementary RNA (cRNA) which in turn serves as a template for the production of more vRNAs. The protein is RNA-directed RNA polymerase catalytic subunit of Influenza A virus (strain A/Kitakyushu/159/1993 H3N2).